The following is a 254-amino-acid chain: Alcohol dehydrogenase (254 aa).

Residue 10-33 (FVAGLGGIGLDTSREIVKSGPKNL) participates in NAD(+) binding. Position 138 (S138) interacts with substrate. Y151 serves as the catalytic Proton acceptor.

The protein belongs to the short-chain dehydrogenases/reductases (SDR) family. Homodimer.

It catalyses the reaction a primary alcohol + NAD(+) = an aldehyde + NADH + H(+). The enzyme catalyses a secondary alcohol + NAD(+) = a ketone + NADH + H(+). The protein is Alcohol dehydrogenase (Adh) of Drosophila borealis (Fruit fly).